We begin with the raw amino-acid sequence, 262 residues long: Global transcriptional regulator CodY (262 aa).

Residues 1–159 (MATLLEKTRK…ATTVIGVQLS (159 aa)) form a GAF domain region. The H-T-H motif DNA-binding region spans 207 to 226 (ASVIADKIGITRSVIVNALR).

The protein belongs to the CodY family.

It localises to the cytoplasm. In terms of biological role, DNA-binding global transcriptional regulator which is involved in the adaptive response to starvation and acts by directly or indirectly controlling the expression of numerous genes in response to nutrient availability. During rapid exponential growth, CodY is highly active and represses genes whose products allow adaptation to nutrient depletion. This Lactococcus lactis subsp. lactis (strain IL1403) (Streptococcus lactis) protein is Global transcriptional regulator CodY.